The following is a 243-amino-acid chain: uncharacterized protein (243 aa).

Low complexity predominate over residues M1–N18. The interval M1 to H30 is disordered. The AMMECR1 domain maps to G38–Q232.

This is an uncharacterized protein from Drosophila melanogaster (Fruit fly).